We begin with the raw amino-acid sequence, 174 residues long: Gamma-crystallin D (174 aa).

2 Beta/gamma crystallin 'Greek key' domains span residues 2 to 40 (GKITFYEDRGFQGRHYECSTDHSNLQPYFSRCNSVRVDS) and 41 to 83 (GCWM…RLIP). The segment at 84 to 87 (HAGS) is connecting peptide. Beta/gamma crystallin 'Greek key' domains lie at 88-128 (HRIR…NVLE) and 129-171 (GCWV…RRVM).

Belongs to the beta/gamma-crystallin family. Detected in the superior olivary complex and fibers of the ventral aoustic stria of the auditory hindbrain.

Crystallins are the dominant structural components of the vertebrate eye lens. This Rattus norvegicus (Rat) protein is Gamma-crystallin D (Crygd).